A 428-amino-acid chain; its full sequence is Ectonucleoside triphosphate diphosphohydrolase 5 (428 aa).

The signal sequence occupies residues 1-24; sequence MTSSRLPVLLALVFSSLSPVLSHS. Residue Glu172 is the Proton acceptor of the active site. Residue Asn232 is glycosylated (N-linked (GlcNAc...) asparagine). 2 disulfide bridges follow: Cys272–Cys303 and Cys363–Cys377.

It belongs to the GDA1/CD39 NTPase family. As to quaternary structure, monomer; active form. Homodimer; disulfide-linked. Homodimers are enzymatically inactive. Requires Ca(2+) as cofactor. Mg(2+) is required as a cofactor.

The protein resides in the endoplasmic reticulum. It is found in the secreted. It carries out the reaction a ribonucleoside 5'-diphosphate + H2O = a ribonucleoside 5'-phosphate + phosphate + H(+). The catalysed reaction is GDP + H2O = GMP + phosphate + H(+). The enzyme catalyses UDP + H2O = UMP + phosphate + H(+). It catalyses the reaction IDP + H2O = IMP + phosphate + H(+). It carries out the reaction CDP + H2O = CMP + phosphate + H(+). The catalysed reaction is ADP + H2O = AMP + phosphate + H(+). The protein operates within protein modification; protein glycosylation. Hydrolyzes nucleoside diphosphates with a preference for GDP, IDP and UDP compared to ADP and CDP. In the lumen of the endoplasmic reticulum, hydrolyzes UDP that acts as an end-product feedback inhibitor of the UDP-Glc:glycoprotein glucosyltransferases. UMP can be transported back by an UDP-sugar antiporter to the cytosol where it is consumed to regenerate UDP-glucose. Therefore, it positively regulates protein reglucosylation by clearing UDP from the ER lumen and by promoting the regeneration of UDP-glucose. Protein reglucosylation is essential to proper glycoprotein folding and quality control in the ER. The protein is Ectonucleoside triphosphate diphosphohydrolase 5 (ENTPD5) of Gallus gallus (Chicken).